A 291-amino-acid chain; its full sequence is Maintenance of mitochondrial morphology protein 1 (291 aa).

Residues 1 to 16 (MPNNYVFSLQPTFTQG) are Lumenal-facing. A helical transmembrane segment spans residues 17–37 (LILGQLSILVLLGMILKFLFL). At 38–291 (DSTQHPFESS…KKEMSDADLS (254 aa)) the chain is on the cytoplasmic side. An SMP-LTD domain is found at 73-277 (NAESAEWFNV…LPGLASVVDV (205 aa)).

Belongs to the MMM1 family. As to quaternary structure, homodimer. Component of the ER-mitochondria encounter structure (ERMES) or MDM complex, composed of MMM1, MDM10, MDM12 and MDM34. An MMM1 homodimer associates with one molecule of MDM12 on each side in a pairwise head-to-tail manner, and the SMP-LTD domains of MMM1 and MDM12 generate a continuous hydrophobic tunnel for phospholipid trafficking.

It is found in the endoplasmic reticulum membrane. Component of the ERMES/MDM complex, which serves as a molecular tether to connect the endoplasmic reticulum (ER) and mitochondria. Components of this complex are involved in the control of mitochondrial shape and protein biogenesis, and function in nonvesicular lipid trafficking between the ER and mitochondria. The MDM12-MMM1 subcomplex functions in the major beta-barrel assembly pathway that is responsible for biogenesis of all outer membrane beta-barrel proteins, and acts in a late step after the SAM complex. The MDM10-MDM12-MMM1 subcomplex further acts in the TOM40-specific pathway after the action of the MDM12-MMM1 complex. Essential for establishing and maintaining the structure of mitochondria and maintenance of mtDNA nucleoids. This Laccaria bicolor (strain S238N-H82 / ATCC MYA-4686) (Bicoloured deceiver) protein is Maintenance of mitochondrial morphology protein 1.